The sequence spans 161 residues: Transcription elongation factor GreB (161 aa).

This sequence belongs to the GreA/GreB family. GreB subfamily.

In terms of biological role, necessary for efficient RNA polymerase transcription elongation past template-encoded arresting sites. The arresting sites in DNA have the property of trapping a certain fraction of elongating RNA polymerases that pass through, resulting in locked ternary complexes. Cleavage of the nascent transcript by cleavage factors such as GreA or GreB allows the resumption of elongation from the new 3'terminus. GreB releases sequences of up to 9 nucleotides in length. The sequence is that of Transcription elongation factor GreB from Vibrio cholerae serotype O1 (strain ATCC 39315 / El Tor Inaba N16961).